The sequence spans 341 residues: tRNA N6-adenosine threonylcarbamoyltransferase (341 aa).

Positions 115 and 119 each coordinate Fe cation. Residues 138–142, D171, G184, D188, and N279 contribute to the substrate site; that span reads VVSGG. Residue D307 coordinates Fe cation.

It belongs to the KAE1 / TsaD family. The cofactor is Fe(2+).

It localises to the cytoplasm. It carries out the reaction L-threonylcarbamoyladenylate + adenosine(37) in tRNA = N(6)-L-threonylcarbamoyladenosine(37) in tRNA + AMP + H(+). Its function is as follows. Required for the formation of a threonylcarbamoyl group on adenosine at position 37 (t(6)A37) in tRNAs that read codons beginning with adenine. Is involved in the transfer of the threonylcarbamoyl moiety of threonylcarbamoyl-AMP (TC-AMP) to the N6 group of A37, together with TsaE and TsaB. TsaD likely plays a direct catalytic role in this reaction. The chain is tRNA N6-adenosine threonylcarbamoyltransferase from Clostridium kluyveri (strain NBRC 12016).